The sequence spans 637 residues: ATP-dependent rRNA helicase SPB4 (637 aa).

The short motif at 10–38 (WENLRVDLEPWLKDAIRSLNYPTMTPVQA) is the Q motif element. The region spanning 41–236 (IPLLSGNKDV…RTGMNNPVKL (196 aa)) is the Helicase ATP-binding domain. ATP is bound at residue 54–61 (AVTGSGKT). The DEAD box motif lies at 184–187 (DEAD). Residues 266–444 (KLTTMLQMLR…KFQKKLRKYM (179 aa)) form the Helicase C-terminal domain. Residues 528–597 (SAEKARLENL…QLEAEQERGG (70 aa)) are a coiled coil. A disordered region spans residues 554–637 (LKVKNEAWSS…GVLQGSFDDL (84 aa)). Composition is skewed to basic and acidic residues over residues 564 to 576 (KTEKRETKLERKE) and 583 to 598 (EAIEKQLEAEQERGGL). The segment covering 621-630 (NGGGGGGGVL) has biased composition (gly residues).

Belongs to the DEAD box helicase family. DDX55/SPB4 subfamily. In terms of assembly, component of pre-60S ribosomal complexes.

It localises to the nucleus. It is found in the nucleolus. It catalyses the reaction ATP + H2O = ADP + phosphate + H(+). ATP-binding RNA helicase involved in the biogenesis of 60S ribosomal subunits. Binds 90S pre-ribosomal particles and dissociates from pre-60S ribosomal particles after processing of 27SB pre-rRNA. Required for the normal formation of 18S rRNA through the processing of pre-rRNAs at sites A0, A1 and A2, and the normal formation of 25S and 5.8S rRNAs through the processing of pre-rRNAs at sites C1 and C2. In Lodderomyces elongisporus (strain ATCC 11503 / CBS 2605 / JCM 1781 / NBRC 1676 / NRRL YB-4239) (Yeast), this protein is ATP-dependent rRNA helicase SPB4.